Here is a 467-residue protein sequence, read N- to C-terminus: UDP-N-acetylmuramate--L-alanine ligase (467 aa).

114 to 120 (GTHGKTT) lines the ATP pocket.

The protein belongs to the MurCDEF family.

Its subcellular location is the cytoplasm. The catalysed reaction is UDP-N-acetyl-alpha-D-muramate + L-alanine + ATP = UDP-N-acetyl-alpha-D-muramoyl-L-alanine + ADP + phosphate + H(+). The protein operates within cell wall biogenesis; peptidoglycan biosynthesis. Its function is as follows. Cell wall formation. The protein is UDP-N-acetylmuramate--L-alanine ligase of Rhodopseudomonas palustris (strain BisB18).